Here is a 628-residue protein sequence, read N- to C-terminus: Kelch-like protein diablo (628 aa).

The interval 1-56 is disordered; the sequence is MGDLPGSTGGGSGPAAAGNASGNASSAGNTGLGVAGTTGVDRPPSPARLSHTSEKH. Residues 14 to 29 are compositionally biased toward low complexity; it reads PAAAGNASGNASSAGN. The BTB domain maps to 74 to 141; it reads CDVVLNVGGR…CYTAHIIVEE (68 aa). Positions 176 to 278 constitute a BACK domain; the sequence is CLGIRAFADT…SPKFLVGTVG (103 aa). 6 Kelch repeats span residues 325–371, 373–419, 420–466, 468–513, 515–560, and 561–607; these read VLFA…VLND, LYAV…VLDG, FLYA…VLGG, LYAI…VFNN, IYAV…VVNG, and QLYA…VMRA.

It participates in protein modification; protein ubiquitination. In terms of biological role, probable substrate-specific adapter of an E3 ubiquitin-protein ligase complex which mediates the ubiquitination and subsequent proteasomal degradation of target proteins. May have a role in synapse differentiation and growth. This chain is Kelch-like protein diablo, found in Drosophila pseudoobscura pseudoobscura (Fruit fly).